Consider the following 131-residue polypeptide: Translation initiation factor 5A (131 aa).

Hypusine is present on lysine 37.

Belongs to the eIF-5A family.

It localises to the cytoplasm. Functions by promoting the formation of the first peptide bond. This Methanococcus maripaludis (strain DSM 14266 / JCM 13030 / NBRC 101832 / S2 / LL) protein is Translation initiation factor 5A.